We begin with the raw amino-acid sequence, 138 residues long: Putative nickel-responsive regulator (138 aa).

4 residues coordinate Ni(2+): histidine 78, histidine 89, histidine 91, and cysteine 97.

It belongs to the transcriptional regulatory CopG/NikR family. Ni(2+) is required as a cofactor.

Its function is as follows. Transcriptional regulator. This is Putative nickel-responsive regulator from Pyrococcus furiosus (strain ATCC 43587 / DSM 3638 / JCM 8422 / Vc1).